Here is a 158-residue protein sequence, read N- to C-terminus: Transcription elongation factor GreA (158 aa).

It belongs to the GreA/GreB family.

In terms of biological role, necessary for efficient RNA polymerase transcription elongation past template-encoded arresting sites. The arresting sites in DNA have the property of trapping a certain fraction of elongating RNA polymerases that pass through, resulting in locked ternary complexes. Cleavage of the nascent transcript by cleavage factors such as GreA or GreB allows the resumption of elongation from the new 3'terminus. GreA releases sequences of 2 to 3 nucleotides. This is Transcription elongation factor GreA from Salmonella typhi.